The chain runs to 374 residues: MARDYYDILGVSRSADPDELKRSYRRLARKYHPDVNKEPGAEDKFKEINKAYETLSDPQMRGRYDQFGEAGVSSAAGAGYQDFGDFGGFADIFETFFSGFGGSPQSGRRRSGPARGEDLRFDLKLKFREAVFGGEQQIRISHLESCKTCEGTGAKPGTRPQTCSTCQGSGQVRRMTRTPLGNFTQVSVCPTCNGQGQVVTEKCDSCGGRGQNQVSKKLQIKIPAGVDTGTRLRVSNEGDAGQKGGPPGDLYVYLFVQEDSEFRRDGTNVLSEFKISYLQAILGAQLPVKTVDGEETITIPAGTQPGTVLTLENHGVPRLGNPVSRGDHLITVIIDIPNRISTEERELLVQLASIRAEQTGKGGIEGFLGGIFGR.

Residues 4–68 (DYYDILGVSR…QMRGRYDQFG (65 aa)) form the J domain. Residues 133–215 (GGEQQIRISH…CGGRGQNQVS (83 aa)) form a CR-type zinc finger. Zn(2+) contacts are provided by cysteine 146, cysteine 149, cysteine 163, cysteine 166, cysteine 189, cysteine 192, cysteine 203, and cysteine 206. 4 CXXCXGXG motif repeats span residues 146 to 153 (CKTCEGTG), 163 to 170 (CSTCQGSG), 189 to 196 (CPTCNGQG), and 203 to 210 (CDSCGGRG).

The protein belongs to the DnaJ family. Homodimer. Requires Zn(2+) as cofactor.

The protein localises to the cytoplasm. Its function is as follows. Participates actively in the response to hyperosmotic and heat shock by preventing the aggregation of stress-denatured proteins and by disaggregating proteins, also in an autonomous, DnaK-independent fashion. Unfolded proteins bind initially to DnaJ; upon interaction with the DnaJ-bound protein, DnaK hydrolyzes its bound ATP, resulting in the formation of a stable complex. GrpE releases ADP from DnaK; ATP binding to DnaK triggers the release of the substrate protein, thus completing the reaction cycle. Several rounds of ATP-dependent interactions between DnaJ, DnaK and GrpE are required for fully efficient folding. Also involved, together with DnaK and GrpE, in the DNA replication of plasmids through activation of initiation proteins. The polypeptide is Chaperone protein DnaJ (Acaryochloris marina (strain MBIC 11017)).